A 430-amino-acid polypeptide reads, in one-letter code: Adenylosuccinate synthetase (430 aa).

Residues 12 to 18 (GDEGKGK) and 40 to 42 (GHT) each bind GTP. D13 functions as the Proton acceptor in the catalytic mechanism. D13 and G40 together coordinate Mg(2+). Residues 13-16 (DEGK), 38-41 (NAGH), T128, R142, Q223, T238, and R302 each bind IMP. H41 (proton donor) is an active-site residue. Residue 298-304 (VNTGRTR) participates in substrate binding. GTP contacts are provided by residues R304, 330–332 (KLD), and 412–414 (GVG).

This sequence belongs to the adenylosuccinate synthetase family. In terms of assembly, homodimer. The cofactor is Mg(2+).

The protein localises to the cytoplasm. It carries out the reaction IMP + L-aspartate + GTP = N(6)-(1,2-dicarboxyethyl)-AMP + GDP + phosphate + 2 H(+). Its pathway is purine metabolism; AMP biosynthesis via de novo pathway; AMP from IMP: step 1/2. Its function is as follows. Plays an important role in the de novo pathway of purine nucleotide biosynthesis. Catalyzes the first committed step in the biosynthesis of AMP from IMP. The polypeptide is Adenylosuccinate synthetase (Corynebacterium ammoniagenes (Brevibacterium ammoniagenes)).